The chain runs to 219 residues: Large ribosomal subunit protein uL1 (219 aa).

Belongs to the universal ribosomal protein uL1 family. Part of the 50S ribosomal subunit.

In terms of biological role, binds directly to 23S rRNA. Probably involved in E site tRNA release. Functionally, protein L1 is also a translational repressor protein, it controls the translation of its operon by binding to its mRNA. In Pyrococcus abyssi (strain GE5 / Orsay), this protein is Large ribosomal subunit protein uL1.